The sequence spans 505 residues: Alpha-ketoglutarate-dependent dioxygenase FTO (505 aa).

Threonine 4 is modified (phosphothreonine). A fe2OG dioxygenase domain region spans residues 32-327 (TPKDDEFYQQ…SSTHRVAECS (296 aa)). Substrate-binding residues include arginine 96 and tyrosine 108. Asparagine 205 provides a ligand contact to 2-oxoglutarate. A loop L1; predicted to block binding of double-stranded DNA or RNA region spans residues 213–224 (PYLKEEPYFGMG). An N6-acetyllysine modification is found at lysine 216. Histidine 231 and aspartate 233 together coordinate Fe cation. 231–234 (HHDE) lines the substrate pocket. Residue tyrosine 295 coordinates 2-oxoglutarate. Histidine 307 provides a ligand contact to Fe cation. 2-oxoglutarate-binding positions include 316–318 (RFS), threonine 320, and arginine 322.

It belongs to the fto family. In terms of assembly, monomer. May also exist as homodimer. It depends on Fe(2+) as a cofactor.

The protein resides in the nucleus. Its subcellular location is the nucleus speckle. It localises to the cytoplasm. It carries out the reaction a 5'-end (N(7)-methyl 5'-triphosphoguanosine)-(N(6),2'-O-dimethyladenosine) in mRNA + 2-oxoglutarate + O2 = a 5'-end (N(7)-methyl 5'-triphosphoguanosine)-(2'-O-methyladenosine) in mRNA + formaldehyde + succinate + CO2. The catalysed reaction is an N(6)-methyladenosine in mRNA + 2-oxoglutarate + O2 = an adenosine in mRNA + formaldehyde + succinate + CO2. It catalyses the reaction N(6)-methyladenosine in U6 snRNA + 2-oxoglutarate + O2 = adenosine in U6 snRNA + formaldehyde + succinate + CO2. The enzyme catalyses a 5'-end (N(7)-methyl 5'-triphosphoguanosine)-(N(6),2'-O-dimethyladenosine) in U6 snRNA + 2-oxoglutarate + O2 = a 5'-end (N(7)-methyl 5'-triphosphoguanosine)-(2'-O-methyladenosine) in U6 snRNA + formaldehyde + succinate + CO2. It carries out the reaction an N(1)-methyladenosine in tRNA + 2-oxoglutarate + O2 = an adenosine in tRNA + formaldehyde + succinate + CO2. Activated by ascorbate. Inhibited by N-oxalylglycine, fumarate and succinate. Functionally, RNA demethylase that mediates oxidative demethylation of different RNA species, such as mRNAs, tRNAs and snRNAs, and acts as a regulator of fat mass, adipogenesis and energy homeostasis. Specifically demethylates N(6)-methyladenosine (m6A) RNA, the most prevalent internal modification of messenger RNA (mRNA) in higher eukaryotes. M6A demethylation by FTO affects mRNA expression and stability. Also able to demethylate m6A in U6 small nuclear RNA (snRNA). Mediates demethylation of N(6),2'-O-dimethyladenosine cap (m6A(m)), by demethylating the N(6)-methyladenosine at the second transcribed position of mRNAs and U6 snRNA. Demethylation of m6A(m) in the 5'-cap by FTO affects mRNA stability by promoting susceptibility to decapping. Also acts as a tRNA demethylase by removing N(1)-methyladenine from various tRNAs. Has no activity towards 1-methylguanine. Has no detectable activity towards double-stranded DNA. Also able to repair alkylated DNA and RNA by oxidative demethylation: demethylates single-stranded RNA containing 3-methyluracil, single-stranded DNA containing 3-methylthymine and has low demethylase activity towards single-stranded DNA containing 1-methyladenine or 3-methylcytosine. Ability to repair alkylated DNA and RNA is however unsure in vivo. Involved in the regulation of fat mass, adipogenesis and body weight, thereby contributing to the regulation of body size and body fat accumulation. Involved in the regulation of thermogenesis and the control of adipocyte differentiation into brown or white fat cells. Regulates activity of the dopaminergic midbrain circuitry via its ability to demethylate m6A in mRNAs. The protein is Alpha-ketoglutarate-dependent dioxygenase FTO of Pongo abelii (Sumatran orangutan).